The primary structure comprises 363 residues: Phosphoserine aminotransferase (363 aa).

Residue Arg-42 participates in L-glutamate binding. Pyridoxal 5'-phosphate-binding residues include Trp-105, Thr-155, Asp-175, and Gln-198. Lys-199 bears the N6-(pyridoxal phosphate)lysine mark. A pyridoxal 5'-phosphate-binding site is contributed by 240 to 241; that stretch reads NT.

It belongs to the class-V pyridoxal-phosphate-dependent aminotransferase family. SerC subfamily. As to quaternary structure, homodimer. Requires pyridoxal 5'-phosphate as cofactor.

Its subcellular location is the cytoplasm. It catalyses the reaction O-phospho-L-serine + 2-oxoglutarate = 3-phosphooxypyruvate + L-glutamate. It carries out the reaction 4-(phosphooxy)-L-threonine + 2-oxoglutarate = (R)-3-hydroxy-2-oxo-4-phosphooxybutanoate + L-glutamate. The protein operates within amino-acid biosynthesis; L-serine biosynthesis; L-serine from 3-phospho-D-glycerate: step 2/3. Its pathway is cofactor biosynthesis; pyridoxine 5'-phosphate biosynthesis; pyridoxine 5'-phosphate from D-erythrose 4-phosphate: step 3/5. Catalyzes the reversible conversion of 3-phosphohydroxypyruvate to phosphoserine and of 3-hydroxy-2-oxo-4-phosphonooxybutanoate to phosphohydroxythreonine. The sequence is that of Phosphoserine aminotransferase from Janthinobacterium sp. (strain Marseille) (Minibacterium massiliensis).